Consider the following 163-residue polypeptide: Small ribosomal subunit protein uS9 (163 aa).

Polar residues predominate over residues 1–11 (MAENTNDSQVV). The tract at residues 1–40 (MAENTNDSQVVETEEELTNYTTETNAGAGTGTSAIEPGYG) is disordered. Residues 18–27 (TNYTTETNAG) are compositionally biased toward low complexity.

It belongs to the universal ribosomal protein uS9 family.

This is Small ribosomal subunit protein uS9 from Bifidobacterium longum (strain DJO10A).